Here is a 234-residue protein sequence, read N- to C-terminus: Segregation and condensation protein A (234 aa).

Belongs to the ScpA family. In terms of assembly, component of a cohesin-like complex composed of ScpA, ScpB and the Smc homodimer, in which ScpA and ScpB bind to the head domain of Smc. The presence of the three proteins is required for the association of the complex with DNA.

Its subcellular location is the cytoplasm. Functionally, participates in chromosomal partition during cell division. May act via the formation of a condensin-like complex containing Smc and ScpB that pull DNA away from mid-cell into both cell halves. In Streptococcus pyogenes serotype M18 (strain MGAS8232), this protein is Segregation and condensation protein A.